Here is a 1922-residue protein sequence, read N- to C-terminus: Endoribonuclease Dicer (1922 aa).

Residues 51–227 (LLEAALDHNT…ELEEKIQKLE (177 aa)) enclose the Helicase ATP-binding domain. 64–71 (LNTGSGKT) contacts ATP. Residues 175–178 (DECH) carry the DECH box motif. Residues 256–595 (DCGPFTDRSG…LRNKCSKSVD (340 aa)) are required for interaction with PRKRA and TARBP2. Residues 409 to 433 (YVSWSDSEDDDEDEEIEEKEKPETN) form a disordered region. Phosphoserine is present on residues Ser413 and Ser415. Residues 414–425 (DSEDDDEDEEIE) show a composition bias toward acidic residues. The 170-residue stretch at 433–602 (NFPSPFTNIL…SVDTGETDID (170 aa)) folds into the Helicase C-terminal domain. The Dicer dsRNA-binding fold domain maps to 630–722 (AIGHINRYCA…MPVGKETVKY (93 aa)). Residues 895–1042 (KFMEDIEKSE…LVPELCAIHP (148 aa)) form the PAZ domain. Phosphoserine is present on residues Ser1016 and Ser1160. Positions 1276–1403 (DSEQSPSIGY…TDKWEKDEMT (128 aa)) constitute an RNase III 1 domain. The Mg(2+) site is built by Glu1316, Asp1395, and Glu1398. 3 positions are modified to phosphoserine: Ser1460, Ser1468, and Ser1470. Residues 1666 to 1824 (FENFEKKINY…LAGAIYMDSG (159 aa)) enclose the RNase III 2 domain. Mg(2+)-binding residues include Glu1705, Asp1810, and Glu1813. In terms of domain architecture, DRBM spans 1849–1914 (VPRSPVRELL…ARRALRSLKA (66 aa)). Position 1868 is a phosphoserine (Ser1868).

Belongs to the helicase family. Dicer subfamily. Component of the RISC loading complex (RLC), or micro-RNA (miRNA) loading complex (miRLC), which is composed of DICER1, AGO2 and TARBP2; DICER1 and TARBP2 are required to process precursor miRNAs (pre-miRNAs) to mature miRNAs and then load them onto AGO2. Note that the trimeric RLC/miRLC is also referred to as RISC. Interacts with DHX9, AGO1, PIWIL1 and PRKRA. Associates with the 60S ribosome. Interacts with BCDIN3D. Interacts with AGO2, TARBP2, EIF6, MOV10 and RPL7A (60S ribosome subunit); they form a large RNA-induced silencing complex (RISC). Interacts (via Dicer dsRNA-binding fold domain) with ALOX5 (via PLAT domain); this interaction enhances arachidonate 5-lipoxygenase activity and modifies the miRNA precursor processing activity of DICER1. In terms of assembly, (Microbial infection) Interacts with ebolavirus transcriptional activator VP30; this interaction prevents TARBP2/TRBP binding to DICER1 and thus allows the virus to counteract host RNA silencing. As to quaternary structure, (Microbial infection) Interacts with ebolavirus transcriptional activator VP35; this interaction prevents TARBP2/TRBP binding to DICER1 and thus allows the virus to counteract host RNA silencing. Mg(2+) serves as cofactor. The cofactor is Mn(2+).

The protein resides in the cytoplasm. Its subcellular location is the perinuclear region. The catalysed reaction is Endonucleolytic cleavage to 5'-phosphomonoester.. Functionally, double-stranded RNA (dsRNA) endoribonuclease playing a central role in short dsRNA-mediated post-transcriptional gene silencing. Cleaves naturally occurring long dsRNAs and short hairpin pre-microRNAs (miRNA) into fragments of twenty-one to twenty-three nucleotides with 3' overhang of two nucleotides, producing respectively short interfering RNAs (siRNA) and mature microRNAs. SiRNAs and miRNAs serve as guide to direct the RNA-induced silencing complex (RISC) to complementary RNAs to degrade them or prevent their translation. Gene silencing mediated by siRNAs, also called RNA interference, controls the elimination of transcripts from mobile and repetitive DNA elements of the genome but also the degradation of exogenous RNA of viral origin for instance. The miRNA pathway on the other side is a mean to specifically regulate the expression of target genes. The polypeptide is Endoribonuclease Dicer (DICER1) (Homo sapiens (Human)).